Reading from the N-terminus, the 47-residue chain is MSNPKGSRKHFVPNHIGTQPRAAGGNKGKQMQDQSGQHAQVIQTKGE.

Over residues 1 to 12 (MSNPKGSRKHFV) the composition is skewed to basic residues. The tract at residues 1 to 47 (MSNPKGSRKHFVPNHIGTQPRAAGGNKGKQMQDQSGQHAQVIQTKGE) is disordered. The segment covering 29–47 (KQMQDQSGQHAQVIQTKGE) has biased composition (polar residues).

The protein belongs to the SspN family.

The protein resides in the spore core. This chain is Small, acid-soluble spore protein N, found in Geobacillus kaustophilus (strain HTA426).